Consider the following 299-residue polypeptide: Taste receptor type 2 member 5 (299 aa).

Residue Met1 is a topological domain, extracellular. The helical transmembrane segment at 2 to 22 (LSAGLGLLMLVAVVEFLIGLI) threads the bilayer. Topologically, residues 23–45 (GNGVLVVWSFREWIRKFSWSSYN) are cytoplasmic. The helical transmembrane segment at 46-66 (LIILGLAGCRFVLQWLIILDL) threads the bilayer. Over 67-82 (SLFPLFQSSRWLRYLS) the chain is Extracellular. A helical membrane pass occupies residues 83–103 (IFWVLVSQASLWFATFLSVFY). At 104-127 (CKKITTFDHPAYLWLKQRAYNLSL) the chain is on the cytoplasmic side. Residues 128 to 148 (WCLLGYFIINLLLTVQIGLMF) traverse the membrane as a helical segment. Over 149 to 175 (YHPPQGNSSIRYPFESWQYLYAFRLNS) the chain is Extracellular. An N-linked (GlcNAc...) asparagine glycan is attached at Asn155. Residues 176–196 (GSYLPLMVFLVSSGMLIVSLY) traverse the membrane as a helical segment. The Cytoplasmic segment spans residues 197 to 223 (THHKKMKVHSAGRRDVRAKAHITALKS). A helical transmembrane segment spans residues 224 to 244 (LGCFLLLHLVYIMASPFSIAS). The Extracellular segment spans residues 245 to 253 (KTYPPDLTS). The helical transmembrane segment at 254-274 (VFIWETLMAAYPSLHSLILIM) threads the bilayer. Topologically, residues 275–299 (GIPRVKQTCQKIXWKTVCARRCWGP) are cytoplasmic.

Belongs to the G-protein coupled receptor T2R family.

It localises to the membrane. Receptor that may play a role in the perception of bitterness and is gustducin-linked. May play a role in sensing the chemical composition of the gastrointestinal content. The activity of this receptor may stimulate alpha gustducin, mediate PLC-beta-2 activation and lead to the gating of TRPM5. This is Taste receptor type 2 member 5 (TAS2R5) from Pan troglodytes (Chimpanzee).